Reading from the N-terminus, the 1018-residue chain is Importin-9 (1018 aa).

The Importin N-terminal domain occupies 35–114; sequence TEKRIKQLEY…RNILPNGLYD (80 aa). A disordered region spans residues 921-950; that stretch reads GKSDEPLTDSEEDGDDEDAPGNPDKPRYIS. Residues 926–939 are compositionally biased toward acidic residues; that stretch reads PLTDSEEDGDDEDA.

This sequence belongs to the importin beta family.

The protein resides in the cytoplasm. It is found in the nucleus. In terms of biological role, nuclear transport receptor that mediates nuclear import of proteins. Serves as receptor for nuclear localization signals (NLS) in cargo substrates. Is thought to mediate docking of the importin/substrate complex to the nuclear pore complex (NPC) through binding to nucleoporin and the complex is subsequently translocated through the pore by an energy requiring, Ran-dependent mechanism. Mediates the import of pre-assembled proteasomes into the nucleus during the late stages of sperm development. The sequence is that of Importin-9 from Drosophila melanogaster (Fruit fly).